Consider the following 295-residue polypeptide: MKRIFLFLATNLAIIVVLSIVLRLLGVERILDESGTNLNLNALLIFAAVFGFGGSFISLAISKWMAKKTMRVHVIEQPRNSTEQWLLETVRRQAREAGIGMPEVGIFNSPDPNAFATGMSKNNALVAVSTGLMDRMNADEVEAVLGHEVAHVANGDMVTLALIQGVVNTFVIFLARVVGHFVDRVVFKNEQGHGPAFWITTIVAEIVFAILASIIVMWFSRQREFRADAGGARLAGREKMISALEKLRAVHTPSQMPDQMAAFGIRGGMGQGLKKLFMSHPPLEERIMALKAMQR.

2 helical membrane passes run 4 to 24 (IFLF…VLRL) and 42 to 62 (ALLI…LAIS). Zn(2+) is bound at residue histidine 147. Residue glutamate 148 is part of the active site. Position 151 (histidine 151) interacts with Zn(2+). A run of 2 helical transmembrane segments spans residues 155–175 (GDMV…IFLA) and 197–217 (FWIT…IIVM). Glutamate 224 is a binding site for Zn(2+).

It belongs to the peptidase M48B family. The cofactor is Zn(2+).

Its subcellular location is the cell inner membrane. This Thioalkalivibrio sulfidiphilus (strain HL-EbGR7) protein is Protease HtpX.